A 146-amino-acid polypeptide reads, in one-letter code: Large ribosomal subunit protein uL15 (146 aa).

A compositionally biased stretch (basic and acidic residues) spans 1–18 (MKLHELKPTPGSRHERNR). The tract at residues 1–69 (MKLHELKPTP…RLPKRGFNNP (69 aa)) is disordered. Positions 42–52 (SGGGVRPGFEG) are enriched in gly residues.

The protein belongs to the universal ribosomal protein uL15 family. In terms of assembly, part of the 50S ribosomal subunit.

In terms of biological role, binds to the 23S rRNA. The chain is Large ribosomal subunit protein uL15 from Exiguobacterium sp. (strain ATCC BAA-1283 / AT1b).